The following is a 496-amino-acid chain: Cobyric acid synthase (496 aa).

The 189-residue stretch at 256 to 444 folds into the GATase cobBQ-type domain; that stretch reads KINIAVVLLR…IHGILDNQAF (189 aa). C337 (nucleophile) is an active-site residue. Residue H436 is part of the active site.

The protein belongs to the CobB/CobQ family. CobQ subfamily.

It functions in the pathway cofactor biosynthesis; adenosylcobalamin biosynthesis. Catalyzes amidations at positions B, D, E, and G on adenosylcobyrinic A,C-diamide. NH(2) groups are provided by glutamine, and one molecule of ATP is hydrogenolyzed for each amidation. The protein is Cobyric acid synthase of Phocaeicola vulgatus (strain ATCC 8482 / DSM 1447 / JCM 5826 / CCUG 4940 / NBRC 14291 / NCTC 11154) (Bacteroides vulgatus).